A 481-amino-acid polypeptide reads, in one-letter code: RuvB-like helicase 2 (481 aa).

76–83 provides a ligand contact to ATP; that stretch reads GPPSTGKT.

This sequence belongs to the RuvB family. As to quaternary structure, may form heterododecamers with hel-1/rvb1. Component of the SWR1 chromatin remodeling complex, the INO80 chromatin remodeling complex, and of the R2TP complex.

Its subcellular location is the nucleus. It catalyses the reaction ATP + H2O = ADP + phosphate + H(+). DNA helicase which participates in several chromatin remodeling complexes, including the SWR1 and the INO80 complexes. The SWR1 complex mediates the ATP-dependent exchange of histone H2A for the H2A variant H2A.Z leading to transcriptional regulation of selected genes by chromatin remodeling. The INO80 complex remodels chromatin by shifting nucleosomes and is involved in DNA repair. Also involved in pre-rRNA processing. This Neurospora crassa (strain ATCC 24698 / 74-OR23-1A / CBS 708.71 / DSM 1257 / FGSC 987) protein is RuvB-like helicase 2 (hel-2).